A 343-amino-acid chain; its full sequence is Transcription factor MYB83 (343 aa).

The span at 1 to 16 (MMMRKPDITTIRDKGK) shows a compositional bias: basic and acidic residues. Residues 1–33 (MMMRKPDITTIRDKGKPNHACGGNNNKPKLRKG) are disordered. HTH myb-type domains lie at 27–79 (KPKL…INYL) and 80–134 (RPDL…KKRL). DNA-binding regions (H-T-H motif) lie at residues 55–79 (WSDI…INYL) and 107–130 (WSQI…NSTL). A disordered region spans residues 134-172 (LKNNSNNNTSSGSSPNNSNSNSLDPRDQHVDMGGNSTSL). Residues 136 to 155 (NNSNNNTSSGSSPNNSNSNS) are compositionally biased toward low complexity.

In terms of tissue distribution, expressed specifically in fiber and vessel cells that are undergoing secondary wall thickening in floral stems. Expressed in vessels but not in xylary fibers in the developing secondary xylem of roots.

The protein localises to the nucleus. In terms of biological role, transcription factor that acts as a molecular switch in the NAC012/SND1-mediated transcriptional network regulating secondary wall biosynthesis. Is directly activated by NAC012/SND1 and its close homologs, including NAC043/NST1, NAC066/NST2, NAC101/VND6 and NAC030/VND7. Is required for functional expression of a number of secondary wall-associated transcription factors and secondary wall biosynthetic genes involved in cellulose, xylan and lignin synthesis. Functions redundantly with MYB46 in the transcriptional regulatory cascade leading to secondary wall formation in fibers and vessels. Transcription activator that binds to the DNA consensus sequence 5'-ACC[AT]A[AC][TC]-3', designated as the secondary wall MYB-responsive element (SMRE). Regulates directly numerous transcription factors and a number of genes involved in secondary wall biosynthesis that contain SMRE elements in their promoters. The sequence is that of Transcription factor MYB83 from Arabidopsis thaliana (Mouse-ear cress).